Here is a 716-residue protein sequence, read N- to C-terminus: MSQNLQETSQAYPRHRPGSHAGPKSLKVTPRATMYTFLPDNFSPAKPKPTKELRPLLCSAVLGLLLVLAAVVAWCYYSASLRKAERLRAELLDLNRGGFSIRNQKGEQVFRLAFRSGALDLDSCSRDGALLGCSRAADGRPLHFFIQTVRPKDTVMCYRVRWEEAVPGRAVEHAMFLGDAAAHWYGGAEMRTQHWPIRLDGQQEPQPFVTSDVYSSDAAFGGILERYWLSSRAAAIKVNDSVPFHLGWNSTERSMRLQARYHDTSYKPPAGRTAAPELSYRVCVGSDVTSIHKYMVRRYFNKPSRVPASEAFRDPIWSTWALHGRAVDQNKVLQFAQQIRQHRFNSSHLEIDDMYTPAYGDFNFDEGKFPNASDMFRRLRDAGFRVTLWVHPFVNYNSSSFGEGVERELFVREPTGRLPALVRWWNGIGAVLDFTHPEAREWFQGHLRRLRLRYNVTSFKFDAGEVSYLPRDFSTYRPLSDPSVWSRRYTEMAEPFFSLAEVRVGYQSQNISCFFRLVDRDSVWGYDLGLRSLIPAVLTVSMLGYPFILPDMIGGNAVPERTAGRQDGPGPERELYVRWLEVAAFMPAMQFSIPPWQYDAEVVAIAHKFAALRASLVAPLLLELAGEITDTGDPIVRPLWWIAPGDETAHRIDSQFLIGDTLLVAPVLEPGKQERDVYLPAGKWRSYKGELFDKTPVLLTDYPVDLDEVAYFTWAS.

The span at Met-1–Ala-11 shows a compositional bias: polar residues. Positions Met-1–Leu-26 are disordered. Topologically, residues Met-1 to Pro-55 are cytoplasmic. A helical; Signal-anchor for type II membrane protein transmembrane segment spans residues Leu-56 to Tyr-76. The Extracellular portion of the chain corresponds to Tyr-77–Ser-716. Residues Asn-239, Asn-249, and Asn-455 are each glycosylated (N-linked (GlcNAc...) asparagine). Active-site residues include Asp-462 and Glu-465. The active-site Proton donor is Asp-527.

The protein belongs to the glycosyl hydrolase 31 family. In terms of assembly, interacts with IGF2; this interaction is required for IGF2 secretion. As to expression, expressed in brain, liver, spleen, skeletal muscle, heart, lung and kidney. High expression is observed in the cerebellum, specifically in astrocytes. Highly expressed in skeletal muscle (at protein level).

The protein localises to the nucleus membrane. It localises to the endoplasmic reticulum membrane. In terms of biological role, putative glycosidase. Promotes myogenesis by activating AKT signaling through the maturation and secretion of IGF2. The protein is Myogenesis-regulating glycosidase (Myorg) of Mus musculus (Mouse).